The chain runs to 687 residues: Amine oxidase [copper-containing] gamma 2 (687 aa).

The signal sequence occupies residues 1–24 (MVELSFSQLLVLLLSLLFLFTTLA). A glycan (N-linked (GlcNAc...) asparagine) is linked at Asn-154. A disulfide bond links Cys-169 and Cys-191. N-linked (GlcNAc...) asparagine glycosylation occurs at Asn-244. Position 333-344 (333-344 (YMDAGEFGLGPS)) interacts with substrate. Asp-335 serves as the catalytic Proton acceptor. Cys-354 and Cys-380 are joined by a disulfide. 420 to 425 (VGNYDY) is a binding site for substrate. The active-site Schiff-base intermediate with substrate; via topaquinone is Tyr-423. At Tyr-423 the chain carries 2',4',5'-topaquinone. Cu cation-binding residues include His-480 and His-482. Mn(2+) is bound by residues Asp-489, Met-490, and Asp-491. N-linked (GlcNAc...) asparagine glycans are attached at residues Asn-497 and Asn-598. Mn(2+)-binding residues include Asp-632 and Ile-633. His-643 is a binding site for Cu cation.

This sequence belongs to the copper/topaquinone oxidase family. In terms of assembly, homodimer. Cu cation is required as a cofactor. It depends on Zn(2+) as a cofactor. Requires L-topaquinone as cofactor. Mn(2+) serves as cofactor. Topaquinone (TPQ) is generated by copper-dependent autoxidation of a specific tyrosyl residue. As to expression, expressed in roots, leaves and cotyledons.

Its subcellular location is the secreted. The protein resides in the extracellular space. It is found in the apoplast. It carries out the reaction a primary methyl amine + O2 + H2O = an aldehyde + H2O2 + NH4(+). Its pathway is amine and polyamine degradation; putrescine degradation. Its function is as follows. Copper amine oxidase that can use putrescine and spermidine as substrates. This is Amine oxidase [copper-containing] gamma 2 from Arabidopsis thaliana (Mouse-ear cress).